Here is a 111-residue protein sequence, read N- to C-terminus: Disintegrin lebein-1-alpha (111 aa).

The N-terminal stretch at 1–20 is a signal peptide; sequence MIQVLLVTICLAVFPYQGSS. The propeptide occupies 21–47; it reads IILESGNVNDYEIVYPKKVTVLPTGAM. One can recognise a Disintegrin domain in the interval 47 to 111; sequence MNSGNPCCDP…SDCPRNPYKD (65 aa). 4 cysteine pairs are disulfide-bonded: cysteine 53-cysteine 76, cysteine 67-cysteine 73, cysteine 72-cysteine 97, and cysteine 85-cysteine 104. Residues 89–91 carry the Cell attachment site motif; the sequence is RGD.

This sequence belongs to the disintegrin family. Dimeric disintegrin subfamily. Heterodimer with subunit beta; disulfide-linked. In terms of tissue distribution, expressed by the venom gland.

The protein resides in the secreted. In terms of biological role, strongly inhibits ADP-induced platelet aggregation on human platelet-rich plasma. Also avidly binds to the laminin-binding beta-1 integrins (alpha-3/beta-1, alpha-6/beta-1, and alpha-7/beta-1) in an RGD-independent manner. This is Disintegrin lebein-1-alpha from Macrovipera lebetinus (Levantine viper).